A 421-amino-acid chain; its full sequence is Histidine--tRNA ligase (421 aa).

This sequence belongs to the class-II aminoacyl-tRNA synthetase family. As to quaternary structure, homodimer.

It is found in the cytoplasm. The catalysed reaction is tRNA(His) + L-histidine + ATP = L-histidyl-tRNA(His) + AMP + diphosphate + H(+). The protein is Histidine--tRNA ligase of Coxiella burnetii (strain CbuG_Q212) (Coxiella burnetii (strain Q212)).